A 144-amino-acid chain; its full sequence is Large ribosomal subunit protein uL15 (144 aa).

The segment at 1-44 is disordered; it reads MKLNELMPSEGSRTNRKRIGRGTSSGTGKTAGRGQKGQKARGKV. Residues 23 to 35 show a composition bias toward gly residues; that stretch reads TSSGTGKTAGRGQ.

The protein belongs to the universal ribosomal protein uL15 family. As to quaternary structure, part of the 50S ribosomal subunit.

Binds to the 23S rRNA. The chain is Large ribosomal subunit protein uL15 from Pediococcus pentosaceus (strain ATCC 25745 / CCUG 21536 / LMG 10740 / 183-1w).